We begin with the raw amino-acid sequence, 334 residues long: Ferrochelatase (334 aa).

Fe cation-binding residues include His-207 and Glu-288.

The protein belongs to the ferrochelatase family.

The protein localises to the cytoplasm. It catalyses the reaction heme b + 2 H(+) = protoporphyrin IX + Fe(2+). The protein operates within porphyrin-containing compound metabolism; protoheme biosynthesis; protoheme from protoporphyrin-IX: step 1/1. In terms of biological role, catalyzes the ferrous insertion into protoporphyrin IX. The polypeptide is Ferrochelatase (Helicobacter pylori (strain ATCC 700392 / 26695) (Campylobacter pylori)).